Consider the following 850-residue polypeptide: AdoMet-dependent rRNA methyltransferase SPB1 (850 aa).

Gly-58, Trp-60, Asp-78, Asp-94, and Asp-119 together coordinate S-adenosyl-L-methionine. The active-site Proton acceptor is Lys-159. The span at 273–282 (GETNEMTWTP) shows a compositional bias: polar residues. Disordered stretches follow at residues 273 to 305 (GETN…ARDE), 388 to 414 (IDKE…NEMK), 529 to 569 (GISD…RTLN), and 620 to 646 (AKKN…KQDD). Basic and acidic residues predominate over residues 388-400 (IDKELSELGEREK). Positions 397-425 (EREKARKKRERRRRNEMKQREIQRMQMNM) form a coiled coil. The span at 401 to 411 (ARKKRERRRRN) shows a compositional bias: basic residues. Acidic residues-rich tracts occupy residues 537–561 (DESD…DEDD) and 628–638 (SDSEDEEDDIV). A coiled-coil region spans residues 746–773 (LEAKGRKKMRALRRLEQMKKKSELINED). Positions 811–850 (KNKGIAGRPRGVTGKYKMVDGTMKKEQRAIRRIKKKMGKK) are disordered. Positions 840–850 (IRRIKKKMGKK) are enriched in basic residues.

The protein belongs to the class I-like SAM-binding methyltransferase superfamily. RNA methyltransferase RlmE family. SPB1 subfamily. As to quaternary structure, component of the nucleolar and nucleoplasmic pre-60S ribosomal particle.

The protein resides in the nucleus. It localises to the nucleolus. The enzyme catalyses a ribonucleotide in rRNA + S-adenosyl-L-methionine = a 2'-O-methylribonucleotide in rRNA + S-adenosyl-L-homocysteine + H(+). Its function is as follows. Required for proper assembly of pre-ribosomal particles during the biogenesis of the 60S ribosomal subunit. The sequence is that of AdoMet-dependent rRNA methyltransferase SPB1 from Yarrowia lipolytica (strain CLIB 122 / E 150) (Yeast).